The following is a 147-amino-acid chain: Small ribosomal subunit protein eS10B (147 aa).

Positions 90–147 (THKRQVRPAAPRAGRPEPRERSSAADAGYRRAEKKDDGAAPGGFAPSFRGGFGRPVAA) are disordered. Over residues 103–127 (GRPEPRERSSAADAGYRRAEKKDDG) the composition is skewed to basic and acidic residues.

Belongs to the eukaryotic ribosomal protein eS10 family. As to quaternary structure, component of the small ribosomal subunit (SSU). Mature yeast ribosomes consist of a small (40S) and a large (60S) subunit. The 40S small subunit contains 1 molecule of ribosomal RNA (18S rRNA) and at least 33 different proteins. The large 60S subunit contains 3 rRNA molecules (25S, 5.8S and 5S rRNA) and at least 46 different proteins. eS10 interacts with GCN1 (via middle region); this interaction is direct and promotes GCN2 kinase activity.

The protein resides in the cytoplasm. In terms of biological role, component of the ribosome, a large ribonucleoprotein complex responsible for the synthesis of proteins in the cell. The small ribosomal subunit (SSU) binds messenger RNAs (mRNAs) and translates the encoded message by selecting cognate aminoacyl-transfer RNA (tRNA) molecules. The large subunit (LSU) contains the ribosomal catalytic site termed the peptidyl transferase center (PTC), which catalyzes the formation of peptide bonds, thereby polymerizing the amino acids delivered by tRNAs into a polypeptide chain. The nascent polypeptides leave the ribosome through a tunnel in the LSU and interact with protein factors that function in enzymatic processing, targeting, and the membrane insertion of nascent chains at the exit of the ribosomal tunnel. eS10 plays a role as a positive regulator of the GCN2 kinase activity by stimulating GCN1-mediated GCN2 activation. The chain is Small ribosomal subunit protein eS10B (rps1002) from Schizosaccharomyces pombe (strain 972 / ATCC 24843) (Fission yeast).